Here is a 1426-residue protein sequence, read N- to C-terminus: Epidermal growth factor receptor (1426 aa).

An N-terminal signal peptide occupies residues 1–30 (MLLRRRNGPCPFPLLLLLLAHCICIWPASA). Residues 31–868 (ARDRYARQNN…SKITANLDVN (838 aa)) lie on the Extracellular side of the membrane. N128, N241, N419, N443, N482, N569, N599, N617, N816, N823, and N828 each carry an N-linked (GlcNAc...) asparagine glycan. A helical transmembrane segment spans residues 869–889 (MIFIITGAVLVPTICILCVVT). The Cytoplasmic segment spans residues 890 to 1426 (YICRQKQKAK…HRNRNTETRV (537 aa)). T902 carries the phosphothreonine; by PKC modification. A Protein kinase domain is found at 938–1198 (LRKGGVLGMG…QLTTVFAEFA (261 aa)). Residues 944-952 (LGMGAFGRV) and K971 each bind ATP. D1063 (proton acceptor) is an active-site residue. Positions 1232 to 1297 (PTTDGSEAIA…DSSAREVGVG (66 aa)) are disordered. Positions 1257 to 1276 (HRTDCTDEMPKLNRYCKDPS) are enriched in basic and acidic residues. Residue Y1310 is modified to Phosphotyrosine; by autocatalysis.

It belongs to the protein kinase superfamily. Tyr protein kinase family. EGF receptor subfamily. In terms of assembly, homodimer. Binding of the ligand spitz triggers homodimerization of the receptor however, it is able to form dimers, albeit weakly, in the absence of spitz. Interacts (when phosphorylated on tyrosine residues) with Vav (via SH2 domain). Interacts (when ubiquitinated) with Graf. May interact (when phosphorylated) with EGFRAP (via SH2 domain). In terms of processing, ubiquitination by Cbl in response to high spi, promotes its interaction with Graf and thus facilitates its GPI-enriched endocytic compartment (GEEC) mediated endocytosis and its subsequent degradation. As to expression, ubiquitously expressed in embryos. In larvae, uniform expression is seen in wing disks, genital disk, anlagen of testis and ovary, and brain cortex. In eye-antenna disk, highest expression is anterior to morphogenetic furrow, levels remain high in photoreceptor precursor cells. This pattern is reversed in posterior eye disk. In adults expression is high in brain cortex and thoracic and abdominal ganglia.

Its subcellular location is the membrane. The enzyme catalyses L-tyrosyl-[protein] + ATP = O-phospho-L-tyrosyl-[protein] + ADP + H(+). In terms of biological role, receptor tyrosine kinase, binding ligands of the EGF family and activating several signaling cascades to convert extracellular cues into appropriate cellular responses. Known ligands include spitz, gurken, vein and giant-lens. Transduces the signal through the ras-raf-MAPK pathway. Critical for the proliferation of imaginal tissues, and for the determination of both the antero-posterior and dorso-ventral polarities of the oocyte. In the embryo, plays a role in the establishment of ventral cell fates, maintenance of amnioserosa and ventral neuroectodermal cells, germ band retraction, cell fate specification in the central nervous system, and production and repair of the cuticle. During dorsal closure (DC) functions with the dpp- and ACK-signaling pathways to regulate expression of the myosin zip in the embryonic epidermis and amnioserosa (AS), and thus coordinate the progression of epidermal cell shape changes required for correct DC. In the embryonic epidermis, functions by negatively regulating dpp and consequently the dpp-dependent expression of the myosin zip. In the AS, negatively regulates the production/ and or secretion of a diffusible signal which, is produced by the ACK-signaling pathway, and acts in the AS and epidermal cells to promote zip expression. Also required in the AS to inhibit or delay apoptosis, and consequently slow the rate of DC. Therefore functions at multiple levels to negatively regulate morphogenesis during DC, suggesting that it acts as a general brake mechanism for adjusting the rate of dorsal closure to ensure that closure proceeds smoothly and without loss of epidermal integrity. During oogenesis, one of two tyrosine kinase chemoattractant receptors (Egfr and Pvr), that function in the border cells (BC) to detect guidance cues from the oocyte and transduce this information to the guidance pathway that regulate the collective migration of the BC cluster through the nurse cells to the oocyte. The polypeptide is Epidermal growth factor receptor (Egfr) (Drosophila melanogaster (Fruit fly)).